The sequence spans 347 residues: Protein RecA (347 aa).

An ATP-binding site is contributed by 70-77 (GPESSGKT).

This sequence belongs to the RecA family.

The protein resides in the cytoplasm. Functionally, can catalyze the hydrolysis of ATP in the presence of single-stranded DNA, the ATP-dependent uptake of single-stranded DNA by duplex DNA, and the ATP-dependent hybridization of homologous single-stranded DNAs. It interacts with LexA causing its activation and leading to its autocatalytic cleavage. The polypeptide is Protein RecA (Ruegeria pomeroyi (strain ATCC 700808 / DSM 15171 / DSS-3) (Silicibacter pomeroyi)).